Here is a 167-residue protein sequence, read N- to C-terminus: MNQLDQYSQPMQHLILLWFWLLDLSPPPSFHLSVKSVDLSLFSLSPLFLLLSISSLIFSRVNKFGIRRVGYAMAPKPDPTVLPDLQEKKAILGTQIEMITQAMTTLESRVTDLQQESNDHRTWVREALDKLLKRDLGDENRPKPTTNKMIATGEQHKGEVSTSLFHD.

The chain crosses the membrane as a helical span at residues 39 to 59; that stretch reads LSLFSLSPLFLLLSISSLIFS. The stretch at 92–122 forms a coiled coil; that stretch reads LGTQIEMITQAMTTLESRVTDLQQESNDHRT. The segment at 134–167 is disordered; that stretch reads RDLGDENRPKPTTNKMIATGEQHKGEVSTSLFHD. Basic and acidic residues predominate over residues 154 to 167; it reads EQHKGEVSTSLFHD.

It localises to the mitochondrion membrane. This is an uncharacterized protein from Arabidopsis thaliana (Mouse-ear cress).